Consider the following 528-residue polypeptide: Linear element-associated protein hop1 (528 aa).

The HORMA domain occupies 11-212; sequence TKSDFTLKNL…RGEFKDIVSF (202 aa). The PHD-type zinc-finger motif lies at 334 to 385; that stretch reads LLNCECGDSTEDSEMFQCERCDGWVHCACYGFESDSDPRQPNQLLCYTCLLV. 8 residues coordinate Zn(2+): cysteine 337, cysteine 339, cysteine 351, cysteine 354, histidine 359, cysteine 362, cysteine 379, and cysteine 382. Positions 507 to 528 are disordered; that stretch reads RPKKVSKTSNTKETDTMKPLRI. Over residues 516–528 the composition is skewed to basic and acidic residues; sequence NTKETDTMKPLRI.

Interacts (via N-terminus) with rec10; the interaction is direct. Interacts (via C-terminus) with rec15 (via C-terminus); the interaction is direct.

The protein localises to the nucleus. It is found in the chromosome. Facilitates initiation of meiotic recombination and DNA double-strand break (DSB) formation at DSB hotspot sites by enhancing the interaction between rec10 and rec15. The polypeptide is Linear element-associated protein hop1 (Schizosaccharomyces pombe (strain 972 / ATCC 24843) (Fission yeast)).